The sequence spans 216 residues: Pyrophosphatase PpaX (216 aa).

Asp-9 functions as the Nucleophile in the catalytic mechanism.

This sequence belongs to the HAD-like hydrolase superfamily. PpaX family. Mg(2+) serves as cofactor.

It catalyses the reaction diphosphate + H2O = 2 phosphate + H(+). In terms of biological role, hydrolyzes pyrophosphate formed during P-Ser-HPr dephosphorylation by HPrK/P. Might play a role in controlling the intracellular pyrophosphate pool. The sequence is that of Pyrophosphatase PpaX from Bacillus cereus (strain Q1).